The following is a 369-amino-acid chain: Peptide chain release factor 1 (369 aa).

Position 238 is an N5-methylglutamine (Gln-238).

The protein belongs to the prokaryotic/mitochondrial release factor family. In terms of processing, methylated by PrmC. Methylation increases the termination efficiency of RF1.

The protein localises to the cytoplasm. Its function is as follows. Peptide chain release factor 1 directs the termination of translation in response to the peptide chain termination codons UAG and UAA. In Parabacteroides distasonis (strain ATCC 8503 / DSM 20701 / CIP 104284 / JCM 5825 / NCTC 11152), this protein is Peptide chain release factor 1.